Reading from the N-terminus, the 520-residue chain is Ribonuclease Y (520 aa).

Residues 3 to 23 (IEIQWIGIGAAFLVGAIGGAL) form a helical membrane-spanning segment. The region spanning 210–273 (AVSVVPLPND…EVARLALERL (64 aa)) is the KH domain. Residues 336 to 429 (VLQHSIEVAF…VQAADALSGA (94 aa)) enclose the HD domain.

The protein belongs to the RNase Y family.

It is found in the cell membrane. Endoribonuclease that initiates mRNA decay. In Syntrophotalea carbinolica (strain DSM 2380 / NBRC 103641 / GraBd1) (Pelobacter carbinolicus), this protein is Ribonuclease Y.